A 415-amino-acid chain; its full sequence is Probable beta-1,4-xylosyltransferase IRX10L (415 aa).

Position 1 (Met-1) is a topological domain, cytoplasmic. Residues Lys-2–Phe-22 form a helical; Signal-anchor for type II membrane protein membrane-spanning segment. Over Arg-23–Trp-415 the chain is Lumenal. Asn-142 and Asn-403 each carry an N-linked (GlcNAc...) asparagine glycan.

The protein belongs to the glycosyltransferase 47 family. Present in the xylem and phloem, and, to a lower extent, in interfascicular cells. Expressed in the root tip, shoot apical meristem (SAM), xylem cells of roots and stems, and in the vasculature of roots, cotyledons and leaves.

Its subcellular location is the golgi apparatus membrane. Functionally, involved in the synthesis of the hemicellulose glucuronoxylan, a major component of secondary cell walls. Probably involved in the elongation of glucuronoxylan xylosyl backbone. The protein is Probable beta-1,4-xylosyltransferase IRX10L (IRX10L) of Arabidopsis thaliana (Mouse-ear cress).